Consider the following 448-residue polypeptide: tRNA-2-methylthio-N(6)-dimethylallyladenosine synthase (448 aa).

Positions 2–119 constitute an MTTase N-terminal domain; sequence KKLYIKTFGC…LSDLIAKRRE (118 aa). Positions 11, 48, 82, 156, 160, and 163 each coordinate [4Fe-4S] cluster. The 236-residue stretch at 142 to 377 folds into the Radical SAM core domain; that stretch reads RQTRGSAYVS…LVESQANQIS (236 aa). The TRAM domain occupies 378–444; the sequence is QKMLGNIERV…NYTLRGKLVE (67 aa).

Belongs to the methylthiotransferase family. MiaB subfamily. Monomer. Requires [4Fe-4S] cluster as cofactor.

The protein resides in the cytoplasm. It catalyses the reaction N(6)-dimethylallyladenosine(37) in tRNA + (sulfur carrier)-SH + AH2 + 2 S-adenosyl-L-methionine = 2-methylsulfanyl-N(6)-dimethylallyladenosine(37) in tRNA + (sulfur carrier)-H + 5'-deoxyadenosine + L-methionine + A + S-adenosyl-L-homocysteine + 2 H(+). Its function is as follows. Catalyzes the methylthiolation of N6-(dimethylallyl)adenosine (i(6)A), leading to the formation of 2-methylthio-N6-(dimethylallyl)adenosine (ms(2)i(6)A) at position 37 in tRNAs that read codons beginning with uridine. This chain is tRNA-2-methylthio-N(6)-dimethylallyladenosine synthase, found in Polynucleobacter necessarius subsp. necessarius (strain STIR1).